A 61-amino-acid chain; its full sequence is Large ribosomal subunit protein bL32 (61 aa).

Residues 1–19 (MAHPKRRQSKTRTAKRRTH) show a composition bias toward basic residues. The disordered stretch occupies residues 1–20 (MAHPKRRQSKTRTAKRRTHD).

The protein belongs to the bacterial ribosomal protein bL32 family.

The chain is Large ribosomal subunit protein bL32 from Bacteroides fragilis (strain YCH46).